The chain runs to 446 residues: Enolase 1 (446 aa).

Positions 164 and 173 each coordinate substrate. E216 functions as the Proton donor in the catalytic mechanism. Residues D251, E302, and D329 each coordinate Mg(2+). Residues E302 and D329 each coordinate substrate. Catalysis depends on K354, which acts as the Proton acceptor. Substrate contacts are provided by residues 381-384 (SHRS) and K405.

It belongs to the enolase family. As to quaternary structure, homodimer. Mg(2+) is required as a cofactor.

It localises to the cytoplasm. It carries out the reaction (2R)-2-phosphoglycerate = phosphoenolpyruvate + H2O. It participates in carbohydrate degradation; glycolysis; pyruvate from D-glyceraldehyde 3-phosphate: step 4/5. The protein is Enolase 1 (ENO1) of Zea mays (Maize).